The sequence spans 401 residues: Tyrosine--tRNA ligase (401 aa).

The 'HIGH' region signature appears at 42 to 51 (PTAPDLHLGH). The short motif at 226-230 (KMSKS) is the 'KMSKS' region element. Lysine 229 lines the ATP pocket. Positions 336-397 (IALAQLLKQI…GKRRIAKLSI (62 aa)) constitute an S4 RNA-binding domain.

This sequence belongs to the class-I aminoacyl-tRNA synthetase family. TyrS type 2 subfamily. In terms of assembly, homodimer.

The protein localises to the cytoplasm. The catalysed reaction is tRNA(Tyr) + L-tyrosine + ATP = L-tyrosyl-tRNA(Tyr) + AMP + diphosphate + H(+). Catalyzes the attachment of tyrosine to tRNA(Tyr) in a two-step reaction: tyrosine is first activated by ATP to form Tyr-AMP and then transferred to the acceptor end of tRNA(Tyr). This Legionella pneumophila subsp. pneumophila (strain Philadelphia 1 / ATCC 33152 / DSM 7513) protein is Tyrosine--tRNA ligase.